The chain runs to 371 residues: MSVNIKIENAQKRYGDNIIIENLSLDIKQGEFFTLLGPSGCGKTTLLRMIAGFNSIEKGNFYFNEKRINDLDPAKRNIGMVFQNYAIFPHLTVEQNVEFGLKNRKVSKEEMKIEIDKFLKLMQIDEYKDRMPERLSGGQQQRVALARALVIKPDVLLMDEPLSNLDAKLRVEMRTAIKEIQNSIGITTVYVTHDQEEAMAVSDRIAVMKDGEIQHLGQPKDIYQRPANLFVATFIGKTNVLKGNLNGSILKVAGKYEVSLNNIKDKNIKGNVVISIRPEEFVIDENQTKDGMRAFIDSSVFLGLNTHYFAHLESGEKIEIVQESKIDSIIPKGAEVYLKVKQDKINVFTEDGSRNILEGVNNDAIGVAYVK.

Positions 5–235 (IKIENAQKRY…PANLFVATFI (231 aa)) constitute an ABC transporter domain. 37–44 (GPSGCGKT) is a binding site for ATP.

It belongs to the ABC transporter superfamily. Fe(3+) ion importer (TC 3.A.1.10) family. As to quaternary structure, the complex is composed of two ATP-binding proteins (FbpC), two transmembrane proteins (FbpB) and a solute-binding protein (FbpA).

The protein resides in the cell inner membrane. The catalysed reaction is Fe(3+)(out) + ATP + H2O = Fe(3+)(in) + ADP + phosphate + H(+). Functionally, part of the ABC transporter complex FbpABC involved in Fe(3+) ions import. Responsible for energy coupling to the transport system. This is Fe(3+) ions import ATP-binding protein FbpC from Fusobacterium nucleatum subsp. nucleatum (strain ATCC 25586 / DSM 15643 / BCRC 10681 / CIP 101130 / JCM 8532 / KCTC 2640 / LMG 13131 / VPI 4355).